Reading from the N-terminus, the 150-residue chain is SsrA-binding protein (150 aa).

The protein belongs to the SmpB family.

The protein localises to the cytoplasm. Its function is as follows. Required for rescue of stalled ribosomes mediated by trans-translation. Binds to transfer-messenger RNA (tmRNA), required for stable association of tmRNA with ribosomes. tmRNA and SmpB together mimic tRNA shape, replacing the anticodon stem-loop with SmpB. tmRNA is encoded by the ssrA gene; the 2 termini fold to resemble tRNA(Ala) and it encodes a 'tag peptide', a short internal open reading frame. During trans-translation Ala-aminoacylated tmRNA acts like a tRNA, entering the A-site of stalled ribosomes, displacing the stalled mRNA. The ribosome then switches to translate the ORF on the tmRNA; the nascent peptide is terminated with the 'tag peptide' encoded by the tmRNA and targeted for degradation. The ribosome is freed to recommence translation, which seems to be the essential function of trans-translation. The sequence is that of SsrA-binding protein from Chlamydia caviae (strain ATCC VR-813 / DSM 19441 / 03DC25 / GPIC) (Chlamydophila caviae).